A 108-amino-acid polypeptide reads, in one-letter code: Large ribosomal subunit protein P1B (108 aa).

Positions 72 to 84 (AGSASGAAAGGEA) are enriched in low complexity. The disordered stretch occupies residues 72–108 (AGSASGAAAGGEAAAEEAAEEEAAEESDDDMGFGLFD). Positions 85 to 102 (AAEEAAEEEAAEESDDDM) are enriched in acidic residues.

The protein belongs to the eukaryotic ribosomal protein P1/P2 family. As to quaternary structure, P1 and P2 exist as dimers at the large ribosomal subunit. Phosphorylated.

Plays an important role in the elongation step of protein synthesis. This chain is Large ribosomal subunit protein P1B (RPP1B), found in Candida albicans (Yeast).